Here is a 178-residue protein sequence, read N- to C-terminus: ADP-ribosylation factor-like protein 5 (178 aa).

Gly2 carries the N-myristoyl glycine lipid modification. GTP is bound by residues 24–31 (GLDNAGKT), 67–71 (DIGGQ), and 126–129 (NKQD).

The protein belongs to the small GTPase superfamily. Arf family.

The protein resides in the golgi apparatus. Functionally, GTP-binding protein that may be involved in protein trafficking; may modulate vesicle budding and uncoating within the Golgi apparatus. Plays a role in the shedding of pathogen spores from intestinal cells. The chain is ADP-ribosylation factor-like protein 5 (arl-5) from Caenorhabditis elegans.